The chain runs to 743 residues: Acetyl-coenzyme A synthetase, chloroplastic/glyoxysomal (743 aa).

Residues 1 to 84 (MKIGSPSSPI…LNAVVLGESL (84 aa)) constitute a chloroplast transit peptide. The active site involves D613.

Belongs to the ATP-dependent AMP-binding enzyme family. Expressed in leaves, flower buds and young flowers.

The protein resides in the plastid. Its subcellular location is the chloroplast. It localises to the glyoxysome. It carries out the reaction acetate + ATP + CoA = acetyl-CoA + AMP + diphosphate. Catalyzes the production of acetyl-CoA, an activated form of acetate that can be used for lipid synthesis or for energy generation. May play a limited role in the biosynthesis of lipids. The protein is Acetyl-coenzyme A synthetase, chloroplastic/glyoxysomal (ACS) of Arabidopsis thaliana (Mouse-ear cress).